Reading from the N-terminus, the 735-residue chain is Rho GTPase-activating protein SYDE1 (735 aa).

The segment at 1-253 (MAEPLLRKTF…SPTSFRPYEV (253 aa)) is disordered. Residues 14 to 31 (RGREKLPRKKSDAKERGH) show a composition bias toward basic and acidic residues. Over residues 35 to 46 (RPEPSPPEPEPQ) the composition is skewed to pro residues. Low complexity predominate over residues 47-71 (APEGSQAGAEGPSSPEASRSPARGA). Residues 122 to 131 (PPAPEPPGPQ) show a composition bias toward pro residues. Over residues 211-221 (GGPGPAAGPGG) the composition is skewed to gly residues. Residues serine 224, serine 231, serine 235, and serine 244 each carry the phosphoserine modification. The C2 domain occupies 249–366 (RPYEVGPAAR…FRGCQAQQLA (118 aa)). The 207-residue stretch at 398–604 (LPLPLLVERE…YLLQSWPDPR (207 aa)) folds into the Rho-GAP domain. Position 575 is a phosphoserine (serine 575). Disordered stretches follow at residues 608-651 (QSPD…SNRY) and 674-696 (DYDH…PRVT). Residues serine 681 and serine 683 each carry the phosphoserine modification.

Post-translationally, palmitoylated. Probably palmitoylated by ZDHHC3 and ZDHHC7. Expressed in trophoblast cells of placental villi.

In terms of biological role, GTPase activator for the Rho-type GTPases. As a GCM1 downstream effector, it is involved in placental development and positively regulates trophoblast cells migration. It regulates cytoskeletal remodeling by controlling the activity of Rho GTPases including RHOA, CDC42 and RAC1. The polypeptide is Rho GTPase-activating protein SYDE1 (SYDE1) (Homo sapiens (Human)).